The chain runs to 305 residues: Protoheme IX farnesyltransferase (305 aa).

9 consecutive transmembrane segments (helical) span residues 31–51 (VMSL…YSVH), 52–72 (PFIA…AGAI), 102–119 (ALSF…FMAL), 123–145 (LLAS…IWLK), 151–171 (NIVI…AAVS), 179–199 (IILF…LALF), 225–245 (ILIY…IGMN), 247–267 (FIYL…SGSL), and 284–304 (SIFY…ISLI).

The protein belongs to the UbiA prenyltransferase family. Protoheme IX farnesyltransferase subfamily.

The protein resides in the cell inner membrane. The catalysed reaction is heme b + (2E,6E)-farnesyl diphosphate + H2O = Fe(II)-heme o + diphosphate. The protein operates within porphyrin-containing compound metabolism; heme O biosynthesis; heme O from protoheme: step 1/1. In terms of biological role, converts heme B (protoheme IX) to heme O by substitution of the vinyl group on carbon 2 of heme B porphyrin ring with a hydroxyethyl farnesyl side group. In Rickettsia felis (strain ATCC VR-1525 / URRWXCal2) (Rickettsia azadi), this protein is Protoheme IX farnesyltransferase.